A 494-amino-acid polypeptide reads, in one-letter code: MSEANHKNIVVVGAGIIGTSVATMLSKVSPNWHIDMFERLEGAGIESSNENNNAGTGHAALCELNYTVEQDDGSIDASKAQEINEQFELSRQFWGNLVKNGDISNPEEFIQPLPHISFVMGPTNVNFLRKRYETLKTLPMFDTIEYTEDMETMRKWMPLMMENREPGHQMAASKIDEGTDVNYGALTRKLAHYLEQKSNVSLKYNHDVVDLTQREDGKWEVVVENRETKEKVTKIADKVFIGAGGHSIPLLQKSGVKQREHLGGFPISGQFLRCTNPDIIKQHAAKVYSKEPQGKPPMTVPHLDTRYINGKQTLLFGPYANIGPKFLKFGSNLDLFESIKPYNITTMLASAVKNVPLIKYSIDQMIKTKEGCMNYLRTFIPDAKDEDWELYTAGKRVQVIKDSEQHGKGFVVFGTEVVNSDDNSMIALLGESPGASTSLSVVLEVLEKNFADDKEAWEPVVKEMVPTYGRSLINDEKLMRETRRETSKNLHLNR.

It belongs to the MQO family. FAD is required as a cofactor.

It carries out the reaction (S)-malate + a quinone = a quinol + oxaloacetate. Its pathway is carbohydrate metabolism; tricarboxylic acid cycle; oxaloacetate from (S)-malate (quinone route): step 1/1. The protein is Probable malate:quinone oxidoreductase 3 of Staphylococcus epidermidis (strain ATCC 12228 / FDA PCI 1200).